A 210-amino-acid chain; its full sequence is MSCPNYCSGNSNSGSLRTSRHIPLTSIDLCPTSVSCGDVLYLPTSSQDHTWVTDNCQETCGEPTSCQPVHCETGNLETSCGSSTAYYVPRPCQGSSFLPASFFSSSCLPVSCRPQRYVSSGCRPLRPLLNSYQPIGDCVPNAYRPQFCLSKSCQPQNLLTSGCQPSSCLAYRPQSLHVVSSSLRPLGPLFSGCQPLTHVFSTCRPSCSGL.

The protein belongs to the PMG family. In terms of assembly, interacts with hair keratins. In terms of tissue distribution, localized high up in the well differentiated portion of the hair follicle cuticle (about 10-15 cell layers above the apex of the dermal papilla).

Functionally, in the hair cortex, hair keratin intermediate filaments are embedded in an interfilamentous matrix, consisting of hair keratin-associated proteins (KRTAP), which are essential for the formation of a rigid and resistant hair shaft through their extensive disulfide bond cross-linking with abundant cysteine residues of hair keratins. The matrix proteins include the high-sulfur and high-glycine-tyrosine keratins. The sequence is that of Keratin-associated protein 26-1 (KRTAP26-1) from Homo sapiens (Human).